We begin with the raw amino-acid sequence, 450 residues long: Tubulin alpha chain (450 aa).

Residue Q11 coordinates GTP. K40 carries the post-translational modification N6-acetyllysine. The GTP site is built by E71, S140, G144, T145, T179, N206, and N228. E71 contributes to the Mg(2+) binding site. The active site involves E254.

It belongs to the tubulin family. In terms of assembly, dimer of alpha and beta chains. A typical microtubule is a hollow water-filled tube with an outer diameter of 25 nm and an inner diameter of 15 nM. Alpha-beta heterodimers associate head-to-tail to form protofilaments running lengthwise along the microtubule wall with the beta-tubulin subunit facing the microtubule plus end conferring a structural polarity. Microtubules usually have 13 protofilaments but different protofilament numbers can be found in some organisms and specialized cells. Requires Mg(2+) as cofactor. Post-translationally, acetylation of alpha chains at Lys-40 stabilizes microtubules and affects affinity and processivity of microtubule motors. This modification has a role in multiple cellular functions, ranging from cell motility, cell cycle progression or cell differentiation to intracellular trafficking and signaling.

It is found in the cytoplasm. Its subcellular location is the cytoskeleton. The catalysed reaction is GTP + H2O = GDP + phosphate + H(+). Its function is as follows. Tubulin is the major constituent of microtubules, a cylinder consisting of laterally associated linear protofilaments composed of alpha- and beta-tubulin heterodimers. Microtubules grow by the addition of GTP-tubulin dimers to the microtubule end, where a stabilizing cap forms. Below the cap, tubulin dimers are in GDP-bound state, owing to GTPase activity of alpha-tubulin. This Euplotes vannus (Marine ciliate) protein is Tubulin alpha chain.